Reading from the N-terminus, the 778-residue chain is Tastin (778 aa).

A compositionally biased stretch (basic and acidic residues) spans 1–11; it reads MTTRQATKDPL. The tract at residues 1-115 is disordered; it reads MTTRQATKDP…PGPPAQTEAP (115 aa). Ser16, Ser98, and Ser170 each carry phosphoserine. Residues 212–244 form a disordered region; sequence ISPSGPSFHPSTRPSFQELRRETAGSSRTSVSQ. Residues 235-244 show a composition bias toward polar residues; that stretch reads AGSSRTSVSQ. 4 positions are modified to phosphoserine: Ser324, Ser334, Ser344, and Ser362. The residue at position 363 (Thr363) is a Phosphothreonine. At Ser376 the chain carries Phosphoserine. Disordered regions lie at residues 406-425, 508-587, and 600-641; these read EGSG…NRTP, ECGE…AEPR, and PESS…RVEL. Residues 513-523 show a composition bias toward pro residues; sequence QPCPPAEPGPP. 4 tandem repeats follow at residues 516–548, 549–581, 582–614, and 615–647. Positions 516-647 are 4 X 33 AA approximate tandem repeats; sequence PPAEPGPPEA…RVELGASEPC (132 aa). A compositionally biased stretch (basic and acidic residues) spans 560 to 574; the sequence is CRSEPEIPESSRQEQ. Over residues 612–622 the composition is skewed to pro residues; it reads EPCPPAEPGPL.

Directly binds bystin, and indirectly trophinin. Strong expression at implantation sites. Was exclusively localized to the apical side of the syncytiotrophoblast. Also found in macrophages.

The protein resides in the cytoplasm. Its function is as follows. Could be involved with bystin and trophinin in a cell adhesion molecule complex that mediates an initial attachment of the blastocyst to uterine epithelial cells at the time of the embryo implantation. The polypeptide is Tastin (TROAP) (Homo sapiens (Human)).